The sequence spans 117 residues: Photosystem II reaction center Psb28 protein (117 aa).

This sequence belongs to the Psb28 family. As to quaternary structure, part of the photosystem II complex.

Its subcellular location is the cellular thylakoid membrane. This Prochlorococcus marinus (strain MIT 9215) protein is Photosystem II reaction center Psb28 protein.